A 375-amino-acid polypeptide reads, in one-letter code: Fructose-1,6-bisphosphate aldolase/phosphatase (375 aa).

Residue D15 is the Proton acceptor; for FBP phosphatase activity of the active site. 4 residues coordinate Mg(2+): D15, H22, D56, and D57. H22 is a beta-D-fructose 1,6-bisphosphate binding site. A dihydroxyacetone phosphate-binding site is contributed by H22. Y94 contacts beta-D-fructose 1,6-bisphosphate. Q98 is a binding site for Mg(2+). 107-108 (GN) is a binding site for beta-D-fructose 1,6-bisphosphate. D135 is a binding site for Mg(2+). Residue K136 participates in beta-D-fructose 1,6-bisphosphate binding. K136 is a binding site for dihydroxyacetone phosphate. Y237 acts as the Proton donor/acceptor; for FBP aldolase activity in catalysis. Mg(2+) contacts are provided by K240, D241, and D242. K240 (schiff-base intermediate with DHAP; for FBP aldolase activity) is an active-site residue. Beta-D-fructose 1,6-bisphosphate contacts are provided by residues 250–251 (QS), R274, D295, and Y357. Dihydroxyacetone phosphate is bound by residues R274 and D295.

This sequence belongs to the FBP aldolase/phosphatase family. In terms of assembly, homooctamer; dimer of tetramers. Requires Mg(2+) as cofactor.

It carries out the reaction beta-D-fructose 1,6-bisphosphate + H2O = beta-D-fructose 6-phosphate + phosphate. The enzyme catalyses beta-D-fructose 1,6-bisphosphate = D-glyceraldehyde 3-phosphate + dihydroxyacetone phosphate. The protein operates within carbohydrate biosynthesis; gluconeogenesis. Its activity is regulated as follows. Activity is enhanced by dithioerythritol, and is slightly inhibited by fructose 2,6-bisphosphate. AMP does not inhibit the enzyme activity. In terms of biological role, catalyzes two subsequent steps in gluconeogenesis: the aldol condensation of dihydroxyacetone phosphate (DHAP) and glyceraldehyde-3-phosphate (GA3P) to fructose-1,6-bisphosphate (FBP), and the dephosphorylation of FBP to fructose-6-phosphate (F6P). Does not display hydrolase activity against fructose 2,6-bisphosphate, fructose 6-phosphate, fructose 1-phosphate, glucose 6-phosphate, and glucose 1-phosphate. Exhibits only negligible activity on inositol-1-phosphate (IMP). Is essential for the growth of T.kodakaraensis under gluconeogenic conditions. The chain is Fructose-1,6-bisphosphate aldolase/phosphatase from Thermococcus kodakarensis (strain ATCC BAA-918 / JCM 12380 / KOD1) (Pyrococcus kodakaraensis (strain KOD1)).